The primary structure comprises 288 residues: Cyclin-dependent kinase 2 homolog (288 aa).

Residues 4–284 (YHGLEKIGEG…AKQALEHAYF (281 aa)) form the Protein kinase domain. ATP-binding positions include 10 to 18 (IGEGTYGVV) and Lys32. Thr14 carries the post-translational modification Phosphothreonine. Tyr15 bears the Phosphotyrosine mark. The active-site Proton acceptor is Asp125. The residue at position 158 (Thr158) is a Phosphothreonine.

The protein belongs to the protein kinase superfamily. CMGC Ser/Thr protein kinase family. CDC2/CDKX subfamily. In terms of assembly, may form a complex composed of at least the catalytic subunit CRK2 and a cyclin. It depends on Mg(2+) as a cofactor.

It is found in the cytoplasm. It carries out the reaction L-seryl-[protein] + ATP = O-phospho-L-seryl-[protein] + ADP + H(+). The enzyme catalyses L-threonyl-[protein] + ATP = O-phospho-L-threonyl-[protein] + ADP + H(+). The catalysed reaction is [DNA-directed RNA polymerase] + ATP = phospho-[DNA-directed RNA polymerase] + ADP + H(+). With respect to regulation, phosphorylation at Thr-14 or Tyr-15 inactivates the enzyme, while phosphorylation at Thr-158 activates it. Functionally, serine/threonine-protein kinase. Involved in the control of the cell cycle. Required for entry into S-phase and mitosis. Probable component of the kinase complex that phosphorylates the repetitive C-terminus of RNA polymerase II. In Plasmodium vivax, this protein is Cyclin-dependent kinase 2 homolog.